The primary structure comprises 511 residues: Maturase K (511 aa).

The protein belongs to the intron maturase 2 family. MatK subfamily.

The protein localises to the plastid. It localises to the chloroplast. Usually encoded in the trnK tRNA gene intron. Probably assists in splicing its own and other chloroplast group II introns. This is Maturase K from Psathyrostachys juncea (Russian wildrye).